Here is a 285-residue protein sequence, read N- to C-terminus: Phosphatidylserine decarboxylase proenzyme (285 aa).

Catalysis depends on charge relay system; for autoendoproteolytic cleavage activity residues Asp96, His152, and Ser250. The active-site Schiff-base intermediate with substrate; via pyruvic acid; for decarboxylase activity is the Ser250. Ser250 is subject to Pyruvic acid (Ser); by autocatalysis.

Belongs to the phosphatidylserine decarboxylase family. PSD-B subfamily. Prokaryotic type I sub-subfamily. Heterodimer of a large membrane-associated beta subunit and a small pyruvoyl-containing alpha subunit. Requires pyruvate as cofactor. In terms of processing, is synthesized initially as an inactive proenzyme. Formation of the active enzyme involves a self-maturation process in which the active site pyruvoyl group is generated from an internal serine residue via an autocatalytic post-translational modification. Two non-identical subunits are generated from the proenzyme in this reaction, and the pyruvate is formed at the N-terminus of the alpha chain, which is derived from the carboxyl end of the proenzyme. The autoendoproteolytic cleavage occurs by a canonical serine protease mechanism, in which the side chain hydroxyl group of the serine supplies its oxygen atom to form the C-terminus of the beta chain, while the remainder of the serine residue undergoes an oxidative deamination to produce ammonia and the pyruvoyl prosthetic group on the alpha chain. During this reaction, the Ser that is part of the protease active site of the proenzyme becomes the pyruvoyl prosthetic group, which constitutes an essential element of the active site of the mature decarboxylase.

Its subcellular location is the cell membrane. It carries out the reaction a 1,2-diacyl-sn-glycero-3-phospho-L-serine + H(+) = a 1,2-diacyl-sn-glycero-3-phosphoethanolamine + CO2. Its pathway is phospholipid metabolism; phosphatidylethanolamine biosynthesis; phosphatidylethanolamine from CDP-diacylglycerol: step 2/2. Catalyzes the formation of phosphatidylethanolamine (PtdEtn) from phosphatidylserine (PtdSer). The chain is Phosphatidylserine decarboxylase proenzyme from Acinetobacter baylyi (strain ATCC 33305 / BD413 / ADP1).